We begin with the raw amino-acid sequence, 759 residues long: Na(+)/H(+) exchanger beta (759 aa).

The Cytoplasmic segment spans residues 1 to 14 (MPAFSCAFPGCRRD). The helical transmembrane segment at 15-34 (LLVIVLVVFVGIGLPIEASA) threads the bilayer. The Extracellular segment spans residues 35 to 75 (PAYQSHGTEGSHLTNITNTKKAFPVLAVNYEHVRKPFEIAL). N-linked (GlcNAc...) asparagine glycosylation occurs at asparagine 49. Residues 76–95 (WILLALLMKLGFHLIPRLSA) traverse the membrane as a helical segment. Topologically, residues 96–97 (VV) are cytoplasmic. Residues 98-117 (PESCLLIVVGLLVGGLIKVI) traverse the membrane as a helical segment. At 118–122 (GEEPP) the chain is on the extracellular side. The helical transmembrane segment at 123-142 (VLDSQLFFLCLLPPIILDAG) threads the bilayer. Over 143–149 (YFLPIRP) the chain is Cytoplasmic. Residues 150–169 (FTENVGTILVFAVIGTLWNA) form a helical membrane-spanning segment. At 170 to 195 (FFMGGLLYALCQIESVGLSGVDLLAC) the chain is on the extracellular side. The helical transmembrane segment at 196 to 214 (LLFGSIVSAVDPVAVLAVF) threads the bilayer. Residues 215 to 225 (EEIHINELVHI) lie on the Cytoplasmic side of the membrane. Residues 226–244 (LVFGESLLNDAVTVVLYNL) traverse the membrane as a helical segment. Topologically, residues 245-261 (FEEFSKVGTVTVLDVFL) are extracellular. The chain crosses the membrane as a helical span at residues 262–282 (GVVCFFVVSLGGVLVGAIYGF). The Cytoplasmic segment spans residues 283-311 (LAAFTSRFTSHTRVIEPLFVFLYSYMAYL). A helical membrane pass occupies residues 312–330 (SSEMFHLSGIMALIACGVV). At 331–352 (MRPYVEANISHKSYTTIKYFLK) the chain is on the extracellular side. Asparagine 338 carries an N-linked (GlcNAc...) asparagine glycan. Residues 353-372 (MWSSVSETLIFIFLGVSTVA) traverse the membrane as a helical segment. The Cytoplasmic portion of the chain corresponds to 373 to 376 (GPHA). Residues 377 to 398 (WNWTFVITTVILCLVSRVLGVI) traverse the membrane as a helical segment. Topologically, residues 399 to 446 (GLTFIINKFRIVKLTKKDQFIVAYGGLRGAIAFSLGYLLSNSHQMRNL) are extracellular. The helical transmembrane segment at 447 to 467 (FLTAIITVIFFTVFVQGMTIR) threads the bilayer. At 468 to 759 (PLVELLAVKK…KEDDDPFMSC (292 aa)) the chain is on the cytoplasmic side. A phosphoserine; by PKA mark is found at serine 641 and serine 648. The interval 681–759 (FPTVHFEQPS…KEDDDPFMSC (79 aa)) is disordered. Residues 707-719 (VPKRPSLKADIEG) are compositionally biased toward basic and acidic residues.

Belongs to the monovalent cation:proton antiporter 1 (CPA1) transporter (TC 2.A.36) family. Post-translationally, activated by cAMP, protein kinase A and protein kinase C.

Its subcellular location is the basolateral cell membrane. Functionally, involved in pH regulation to eliminate acids generated by active metabolism or to counter adverse environmental conditions. Major proton extruding system driven by the inward sodium ion chemical gradient. The sequence is that of Na(+)/H(+) exchanger beta from Oncorhynchus mykiss (Rainbow trout).